The following is a 423-amino-acid chain: Histidine--tRNA ligase (423 aa).

Belongs to the class-II aminoacyl-tRNA synthetase family. In terms of assembly, homodimer.

The protein localises to the cytoplasm. The enzyme catalyses tRNA(His) + L-histidine + ATP = L-histidyl-tRNA(His) + AMP + diphosphate + H(+). The chain is Histidine--tRNA ligase from Orientia tsutsugamushi (strain Boryong) (Rickettsia tsutsugamushi).